Here is a 423-residue protein sequence, read N- to C-terminus: UDP-N-acetylglucosamine 1-carboxyvinyltransferase 2 (423 aa).

23–24 is a binding site for phosphoenolpyruvate; the sequence is KN. Arg93 serves as a coordination point for UDP-N-acetyl-alpha-D-glucosamine. The active-site Proton donor is Cys117. Cys117 is subject to 2-(S-cysteinyl)pyruvic acid O-phosphothioketal. Residues 122-126, Asp305, and Ile327 each bind UDP-N-acetyl-alpha-D-glucosamine; that span reads RPIDQ.

The protein belongs to the EPSP synthase family. MurA subfamily.

It localises to the cytoplasm. It carries out the reaction phosphoenolpyruvate + UDP-N-acetyl-alpha-D-glucosamine = UDP-N-acetyl-3-O-(1-carboxyvinyl)-alpha-D-glucosamine + phosphate. Its pathway is cell wall biogenesis; peptidoglycan biosynthesis. Functionally, cell wall formation. Adds enolpyruvyl to UDP-N-acetylglucosamine. The protein is UDP-N-acetylglucosamine 1-carboxyvinyltransferase 2 of Listeria monocytogenes serovar 1/2a (strain ATCC BAA-679 / EGD-e).